Reading from the N-terminus, the 318-residue chain is NF-kappa-B inhibitor alpha (318 aa).

The tract at residues 1 to 44 is disordered; sequence MLSAHRPAEPPAVEGCEPPRKERQGGLLPPDDRHDSGLDSMKEE. The segment covering 17–44 has biased composition (basic and acidic residues); sequence EPPRKERQGGLLPPDDRHDSGLDSMKEE. A Glycyl lysine isopeptide (Lys-Gly) (interchain with G-Cter in ubiquitin) cross-link involves residue Lys-21. Ser-36 is modified (phosphoserine; by IKKA and IKKB). Ser-40 bears the Phosphoserine; by IKKA, IKKB and IKKE mark. Tyr-46 is modified (phosphotyrosine; by Tyr-kinases). ANK repeat units follow at residues 114 to 143, 147 to 176, 186 to 215, and 220 to 249; these read LSQT…DLDV, RGNT…PHHL, NGHT…DVNA, and NGRT…DVNK.

Belongs to the NF-kappa-B inhibitor family. Post-translationally, phosphorylated at Ser-36 and Ser-40 by IKKA/CHUK and IKKB/IKBKB; disables inhibition of NF-kappa-B DNA-binding activity. Phosphorylation at positions 36 and 40 is prerequisite to polyubiquitination and subsequent degradation. Monoubiquitinated at Lys-21 following phosphorylation at Ser-36 and Ser-40. The resulting polyubiquitination leads to protein degradation. In terms of processing, hydroxylated by HIF1AN. As to expression, highly expressed in lymph node, thymus followed by liver, brain, muscle, kidney, gastrointestinal and reproductive tract.

Its subcellular location is the cytoplasm. The protein resides in the nucleus. Its function is as follows. Inhibits the activity of dimeric NF-kappa-B/REL complexes by trapping REL (RELA/p65 and NFKB1/p50) dimers in the cytoplasm by masking their nuclear localization signals. On cellular stimulation by immune and pro-inflammatory responses, becomes phosphorylated promoting ubiquitination and degradation, enabling the dimeric RELA to translocate to the nucleus and activate transcription. In Gallus gallus (Chicken), this protein is NF-kappa-B inhibitor alpha (NFKBIA).